The chain runs to 659 residues: Exoribonuclease 2 (659 aa).

In terms of domain architecture, RNB spans 189 to 531 (RENLTALHFV…NHRLIKAVLA (343 aa)). In terms of domain architecture, S1 motif spans 576–658 (NAEFEAEVQD…ATRSIVGEIL (83 aa)).

The protein belongs to the RNR ribonuclease family. RNase II subfamily.

It is found in the cytoplasm. It carries out the reaction Exonucleolytic cleavage in the 3'- to 5'-direction to yield nucleoside 5'-phosphates.. Its function is as follows. Involved in mRNA degradation. Hydrolyzes single-stranded polyribonucleotides processively in the 3' to 5' direction. This chain is Exoribonuclease 2, found in Haemophilus influenzae (strain PittGG).